Here is a 304-residue protein sequence, read N- to C-terminus: Putative S-adenosyl-L-methionine-dependent methyltransferase YktD (304 aa).

Residues D134 and D163 to F164 contribute to the S-adenosyl-L-methionine site.

This sequence belongs to the UPF0677 family.

Its function is as follows. May be involved in polyketide synthesis. This chain is Putative S-adenosyl-L-methionine-dependent methyltransferase YktD (yktD), found in Bacillus subtilis (strain 168).